Consider the following 460-residue polypeptide: Flavin-containing monooxygenase FMO GS-OX-like 9 (460 aa).

20-25 (GAGPAG) contributes to the FAD binding site. Residue 222-227 (GNSMSG) coordinates NADP(+).

This sequence belongs to the FMO family. FAD is required as a cofactor.

In terms of biological role, catalyzes the conversion of methylthioalkyl glucosinolates of any chain length into methylsulfinylalkyl glucosinolates. In Arabidopsis thaliana (Mouse-ear cress), this protein is Flavin-containing monooxygenase FMO GS-OX-like 9.